Here is a 177-residue protein sequence, read N- to C-terminus: uncharacterized protein (177 aa).

It is found in the plastid. The protein localises to the chloroplast. This is an uncharacterized protein from Chlorella vulgaris (Green alga).